The chain runs to 288 residues: uncharacterized protein (288 aa).

Residues 126–136 are compositionally biased toward low complexity; sequence VAAPASTPVAP. Disordered regions lie at residues 126–227 and 258–288; these read VAAP…VTSV and KEKDQTAEESQEQPSLSLEETLVHDRISSEE. Basic and acidic residues predominate over residues 143–152; that stretch reads RKEFKNEKWK. Over residues 153–162 the composition is skewed to basic residues; that stretch reads DKKKQGRRRN. The segment covering 180–194 has biased composition (acidic residues); it reads VAEECLQESSSEEGD. Basic and acidic residues predominate over residues 278 to 288; the sequence is TLVHDRISSEE.

The protein belongs to the chlamydial CPn_0623/CT_504/TC_0791 family.

This is an uncharacterized protein from Chlamydia trachomatis serovar D (strain ATCC VR-885 / DSM 19411 / UW-3/Cx).